The primary structure comprises 308 residues: GTP cyclohydrolase FolE2 (308 aa).

It belongs to the GTP cyclohydrolase IV family.

The catalysed reaction is GTP + H2O = 7,8-dihydroneopterin 3'-triphosphate + formate + H(+). Its pathway is cofactor biosynthesis; 7,8-dihydroneopterin triphosphate biosynthesis; 7,8-dihydroneopterin triphosphate from GTP: step 1/1. Its function is as follows. Converts GTP to 7,8-dihydroneopterin triphosphate. The polypeptide is GTP cyclohydrolase FolE2 (Idiomarina loihiensis (strain ATCC BAA-735 / DSM 15497 / L2-TR)).